A 247-amino-acid polypeptide reads, in one-letter code: Protein McbF (247 aa).

Residues 6–234 enclose the ABC transporter domain; the sequence is LEINSLSFSY…NNETTQKRHL (229 aa). 40–47 lines the ATP pocket; it reads GENPAGKT.

Belongs to the ABC transporter superfamily.

Together with two further proteins McbE and McbG this protein causes immunity to the peptide antibiotic microcin B17, which inhibits DNA replication in enterobacteriaceae. Immunity is determined by two different mechanisms. McbE is involved in the production of extracellular MccB17 and, in a complex with mcbf it also serves as 'pump' for the export of active MccB17 from the cytoplasm to the periplasmic space. This chain is Protein McbF (mcbF), found in Escherichia coli.